A 391-amino-acid polypeptide reads, in one-letter code: Multidrug resistance protein MdtL (391 aa).

12 helical membrane-spanning segments follow: residues 4-24, 42-62, 69-89, 93-113, 131-151, 158-178, 203-222, 245-265, 269-289, 293-313, 331-351, and 356-376; these read FLIC…MYLV, IAFS…GKVA, PVAI…SLAE, LFLA…VVAF, LLNG…HLIM, SLFW…LFIL, FFLS…LTFV, ALTA…LGIF, TLMI…AVSP, VSLF…GVAM, LGIA…VVGI, and MLIG…MFVA.

It belongs to the major facilitator superfamily. DHA1 family. MdtL (TC 2.A.1.2.22) subfamily.

The protein resides in the cell inner membrane. Functionally, confers resistance to chloramphenicol. The chain is Multidrug resistance protein MdtL from Escherichia coli O139:H28 (strain E24377A / ETEC).